The chain runs to 76 residues: Esculentin-2-ALa (76 aa).

An N-terminal signal peptide occupies residues 1–22; it reads MFTLKKSMLLLFFLGTISLSLC. The propeptide occupies 23–39; it reads EEERNADEDDGEKEVKR. The cysteines at positions 70 and 76 are disulfide-linked.

Expressed by the skin glands.

It localises to the secreted. Functionally, antimicrobial peptide with activity against Gram-positive and Gram-negative bacteria and against fungi. Has been tested against S.aureus (MIC=2.5 ug/mL), B.pumilus (MIC=2.5 ug/mL), B.cereus (MIC=7.5 ug/mL), E.coli (MIC=12.5 ug/mL), B.dysenteriae (MIC=7.5 ug/mL), A.cacoaceticus (MIC=25.0 ug/mL), P.aeruginosa (MIC=50.0 ug/mL) and C.albicans (MIC=2.5 ug/mL). Also shows a weak hemolytic activity. The protein is Esculentin-2-ALa of Amolops loloensis (Lolokou Sucker Frog).